The chain runs to 188 residues: Archaemetzincin (188 aa).

His-137 provides a ligand contact to Zn(2+). The active-site Proton acceptor is the Glu-138. Residues His-141, His-147, Cys-148, Cys-153, Cys-172, and Cys-175 each coordinate Zn(2+).

This sequence belongs to the peptidase M54 family. Monomer. Zn(2+) serves as cofactor.

Its function is as follows. Probable zinc metalloprotease whose natural substrate is unknown. This is Archaemetzincin from Pyrococcus horikoshii (strain ATCC 700860 / DSM 12428 / JCM 9974 / NBRC 100139 / OT-3).